The chain runs to 281 residues: MKRESYQAEMFNWCEALKDQIQKRGQLDQFEDQIDKMIEALEDDQTTEEDWYKQAAALYRDITESDDTSERRAYVPIGKHVLPKLPYKYSALEPYISRDIMILHHTKHHQSYVDGLNKAESELKKARATKNYDLITHWERELAFHGAGHYLHSIFWFSMHPNGKRRPTGALFQMIDLSFGSYSAFKEHFTQASKKVEGVGWAILVWAPRSGRLEILTAEKHQLFSQWDVIPLLPLDVWEHAYYLQYKNDRASYVDHWWNVVDWREAEKRFEQAKEVVWKLY.

Fe cation-binding residues include His-104, His-152, Asp-236, and His-240.

It belongs to the iron/manganese superoxide dismutase family. It depends on Fe cation as a cofactor.

The enzyme catalyses 2 superoxide + 2 H(+) = H2O2 + O2. In terms of biological role, destroys superoxide anion radicals which are normally produced within the cells and which are toxic to biological systems. This is Probable superoxide dismutase [Fe] (sodF) from Bacillus subtilis (strain 168).